The primary structure comprises 374 residues: Tomoregulin-2 (374 aa).

A signal peptide spans 1–40 (MVLWESPRQCSSWTLCEGFCWLLLLPVTLLIIARPVKLAA). The Extracellular portion of the chain corresponds to 41 to 320 (FPTSLSDCQT…VPGPVRFQYV (280 aa)). N-linked (GlcNAc...) asparagine glycosylation is present at Asn55. Kazal-like domains follow at residues 90–137 (VCQF…SCAT) and 181–229 (VCNI…RCQD). 6 disulfide bridges follow: Cys91/Cys121, Cys95/Cys114, Cys103/Cys135, Cys182/Cys213, Cys186/Cys206, and Cys195/Cys227. Asn230 carries an N-linked (GlcNAc...) asparagine glycan. The region spanning 261–301 (HHIPCPEHYNGFCMHGKCEHSINMQEPSCRCDAGYTGQHCE) is the EGF-like domain. 3 cysteine pairs are disulfide-bonded: Cys265-Cys278, Cys273-Cys289, and Cys291-Cys300. Residues 303–320 (KDYSVLYVVPGPVRFQYV) are required for shedding. A helical transmembrane segment spans residues 321–341 (LIAAVIGTIQIAVICVVVLCI). Residues 342–374 (TRKCPRSNRIHRQKQNTGHYSSDNTTRASTRLI) lie on the Cytoplasmic side of the membrane. The segment at 353–374 (RQKQNTGHYSSDNTTRASTRLI) is disordered. Residues 356 to 374 (QNTGHYSSDNTTRASTRLI) are compositionally biased toward polar residues.

It belongs to the tomoregulin family. Post-translationally, O-glycosylated; contains chondroitin sulfate glycosaminoglycans. In terms of processing, a soluble form (TMEFF2-ECD) is produced by proteolytic shedding. This shedding can be induced by phorbol ester or pro-inflammatory cytokines such as TNFalpha, and is mediated by a metalloproteinase ADAM. Widely expressed in the brain. In the olfactory bulb expressed in mitral cell, granule, and glomerular layers. In the hippocampus expressed in hippocampal cornu ammonis, pyramidal layer, dentate gyrus, and substantia nigra pars compacta.

Its subcellular location is the membrane. May be a survival factor for hippocampal and mesencephalic neurons. The shedded form may up-regulate cell proliferation. In Mus musculus (Mouse), this protein is Tomoregulin-2 (Tmeff2).